We begin with the raw amino-acid sequence, 356 residues long: Arginine kinase 1 (356 aa).

A Phosphagen kinase N-terminal domain is found at 6–91; that stretch reads VLAKLEEGYA…FDPIIEDYHG (86 aa). A substrate-binding site is contributed by 64-68; it reads GVGIY. One can recognise a Phosphagen kinase C-terminal domain in the interval 119-356; that stretch reads YVISTRVRCG…TELIKLEKSL (238 aa). Residues 122 to 126 and His-185 contribute to the ATP site; that span reads STRVR. Glu-225 is a substrate binding site. Arg-229 is an ATP binding site. Cys-271 lines the substrate pocket. ATP contacts are provided by residues 280 to 284 and 309 to 314; these read RASVH and RGTRGE. Substrate is bound at residue Glu-314.

The protein belongs to the ATP:guanido phosphotransferase family.

The catalysed reaction is L-arginine + ATP = N(omega)-phospho-L-arginine + ADP + H(+). The protein is Arginine kinase 1 of Drosophila melanogaster (Fruit fly).